The chain runs to 207 residues: LexA repressor (207 aa).

A DNA-binding region (H-T-H motif) is located at residues 28–48; that stretch reads RAEIARELGFRSANAAEEHLK. Catalysis depends on for autocatalytic cleavage activity residues S124 and K161.

It belongs to the peptidase S24 family. Homodimer.

The catalysed reaction is Hydrolysis of Ala-|-Gly bond in repressor LexA.. Functionally, represses a number of genes involved in the response to DNA damage (SOS response), including recA and lexA. In the presence of single-stranded DNA, RecA interacts with LexA causing an autocatalytic cleavage which disrupts the DNA-binding part of LexA, leading to derepression of the SOS regulon and eventually DNA repair. In Vibrio vulnificus (strain CMCP6), this protein is LexA repressor.